We begin with the raw amino-acid sequence, 343 residues long: Aspartate carbamoyltransferase catalytic subunit (343 aa).

Residues Arg91 and Thr92 each coordinate carbamoyl phosphate. Lys119 serves as a coordination point for L-aspartate. Residues Arg141, His171, and Gln174 each contribute to the carbamoyl phosphate site. Residues Arg204 and Arg259 each coordinate L-aspartate. Gly300 and Pro301 together coordinate carbamoyl phosphate.

Belongs to the aspartate/ornithine carbamoyltransferase superfamily. ATCase family. As to quaternary structure, heterododecamer (2C3:3R2) of six catalytic PyrB chains organized as two trimers (C3), and six regulatory PyrI chains organized as three dimers (R2).

It catalyses the reaction carbamoyl phosphate + L-aspartate = N-carbamoyl-L-aspartate + phosphate + H(+). It functions in the pathway pyrimidine metabolism; UMP biosynthesis via de novo pathway; (S)-dihydroorotate from bicarbonate: step 2/3. Its function is as follows. Catalyzes the condensation of carbamoyl phosphate and aspartate to form carbamoyl aspartate and inorganic phosphate, the committed step in the de novo pyrimidine nucleotide biosynthesis pathway. This chain is Aspartate carbamoyltransferase catalytic subunit, found in Burkholderia vietnamiensis (strain G4 / LMG 22486) (Burkholderia cepacia (strain R1808)).